The chain runs to 167 residues: Keratin-associated protein 1-3 (167 aa).

The protein belongs to the KRTAP type 1 family. Interacts with hair keratins. Expressed in the middle/upper portions of the hair cortex, in the region termed the keratogenous zone.

In the hair cortex, hair keratin intermediate filaments are embedded in an interfilamentous matrix, consisting of hair keratin-associated proteins (KRTAP), which are essential for the formation of a rigid and resistant hair shaft through their extensive disulfide bond cross-linking with abundant cysteine residues of hair keratins. The matrix proteins include the high-sulfur and high-glycine-tyrosine keratins. This Homo sapiens (Human) protein is Keratin-associated protein 1-3 (KRTAP1-3).